The sequence spans 594 residues: KIF-binding protein (594 aa).

Belongs to the KIF-binding protein family.

Its subcellular location is the cytoplasm. It localises to the cytoskeleton. Activator of KIF1B plus-end-directed microtubule motor activity. Required for organization of axonal microtubules, and axonal outgrowth and maintenance during peripheral and central nervous system development. The polypeptide is KIF-binding protein (Kifbp) (Gallus gallus (Chicken)).